The following is a 179-amino-acid chain: Lebocin-4 (179 aa).

Residues 1 to 16 (MYKFLVFSSVLVLFFA) form the signal peptide. Positions 17–120 (QASCQRFIQP…RPIESHRNTR (104 aa)) are excised as a propeptide. O-linked (GalNAc...) threonine glycosylation occurs at Thr135. A propeptide spanning residues 153–179 (RRHASDDQEELRHHNEHFLIPRDILQD) is cleaved from the precursor.

The protein belongs to the lebocin family. O-glycosylation is important for the antibacterial activity of lebocin. In terms of tissue distribution, hemolymph. Produced in fat body.

It is found in the secreted. Functionally, antibacterial peptide. The polypeptide is Lebocin-4 (LEB4) (Bombyx mori (Silk moth)).